A 73-amino-acid chain; its full sequence is Conotoxin CnIIIG (73 aa).

The N-terminal stretch at 1–19 (MSKLGVLLTICLLLLPLTA) is a signal peptide. Residues 20–48 (LPMDEDQPADQPADRMQDDISSEQYPLFD) constitute a propeptide that is removed on maturation. Pyrrolidone carboxylic acid is present on glutamine 51. 3 disulfide bridges follow: cysteine 53–cysteine 72, cysteine 54–cysteine 70, and cysteine 60–cysteine 73.

It belongs to the conotoxin M superfamily. Expressed by the venom duct.

It localises to the secreted. In terms of biological role, shows a paralytic effect in fish. This chain is Conotoxin CnIIIG, found in Conus consors (Singed cone).